Here is a 539-residue protein sequence, read N- to C-terminus: 3-hydroxy-3-methylglutaryl-coenzyme A reductase 1 (539 aa).

The chain crosses the membrane as a helical span at residues 63–83; that stretch reads FATVVCQLASVVYLLSLFAHP. Positions 84-124 are linker; the sequence is DAPATTTGDDDDGQGGSRRARPAAAEPAPMHGHGGGMMEAD. Residues 87 to 116 form a disordered region; it reads ATTTGDDDDGQGGSRRARPAAAEPAPMHGH. Residues 105-114 show a composition bias toward low complexity; it reads PAAAEPAPMH. Residues 125 to 539 form a catalytic region; it reads DEEIVAAVAS…SSKDVAKAAS (415 aa). Glu-218 serves as the catalytic Charge relay system. Residue Asn-282 is glycosylated (N-linked (GlcNAc...) asparagine). Active-site charge relay system residues include Lys-350 and Asp-426. A helical membrane pass occupies residues 496–516; that stretch reads LATIVAGSVLAGELSLLAALA. The Proton donor role is filled by His-524. N-linked (GlcNAc...) asparagine glycosylation is present at Asn-528.

This sequence belongs to the HMG-CoA reductase family.

It is found in the endoplasmic reticulum membrane. It catalyses the reaction (R)-mevalonate + 2 NADP(+) + CoA = (3S)-3-hydroxy-3-methylglutaryl-CoA + 2 NADPH + 2 H(+). It functions in the pathway metabolic intermediate biosynthesis; (R)-mevalonate biosynthesis; (R)-mevalonate from acetyl-CoA: step 3/3. Catalyzes the synthesis of mevalonate. The specific precursor of all isoprenoid compounds present in plants. In Oryza sativa subsp. indica (Rice), this protein is 3-hydroxy-3-methylglutaryl-coenzyme A reductase 1 (HMG1).